A 563-amino-acid chain; its full sequence is Cytochrome P450 monooxygenase phqL (563 aa).

3 helical membrane passes run 20–40, 52–72, and 80–100; these read ENFS…IIIF, IPVG…FVPG, and ALWL…VSIL. Asn-279 is a glycosylation site (N-linked (GlcNAc...) asparagine). A helical transmembrane segment spans residues 362 to 382; the sequence is LVIFAGSGTVAVTIIGCLYFL. Asn-419 carries an N-linked (GlcNAc...) asparagine glycan. Cys-502 lines the heme pocket.

The protein belongs to the cytochrome P450 family. It depends on heme as a cofactor.

Its subcellular location is the membrane. It participates in alkaloid biosynthesis. Its function is as follows. Cytochrome P450 monooxygenase; part of the gene cluster that mediates the biosynthesis of paraherquamide, a fungal indole alkaloid that belongs to a family of natural products containing a characteristic bicyclo[2.2.2]diazaoctane core. The first steps in the biosynthesis of paraherquamide is the production of the beta-methyl-proline precursor from L-isoleucine. They require oxidation of a terminally hydroxylated L-isoleucine to the corresponding aldehyde by enzymes which have still to be identified. Spontaneous cyclization and dehydration would yield the 4-methyl pyrolline-5-carboxylic acid, which is then reduced by the pyrroline-5-carboxylate reductase phqD leading to the beta-methyl-proline precursor. The next step of paraherquamide biosynthesis involves coupling of beta-methyl-proline and L-tryptophan by the bimodular NRPS phqB, to produce a monooxopiperazine intermediate. The reductase (R) domain of phqB utilizes NADPH for hydride transfer to reduce the thioester bond of the T domain-tethered linear dipeptide to a hemithioaminal intermediate, which spontaneously cleaves the C-S bond to release the aldehyde product. This compound undergoes spontaneous cyclization and dehydration to give a dienamine which is reverse prenylated at C-2 by the reverse prenyltransferase phqJ. The other prenyltransferase present in the cluster, phqI may be a redundant gene in the pathway. During biosynthetic assembly, the key step to produce the polycyclic core is catalyzed by the bifunctional reductase and intramolecular [4+2] Diels-Alderase, phqE, resulting in formation of the [2.2.2] diazaoctane intermediate preparaherquamide. Following formation of preparaherquamide, an indole 2,3-epoxidation-initiated pinacol-like rearrangement is catalyzed by the phqK FAD-dependent monooxygenase. The prenyltransferase phqA, the cytochrome P450 monooxygenase phqL, and the FAD-linked oxidoreductase phqH (or the cytochrome P450 monooxygenase phqM), are proposed to be involved in the formation of the pyran ring. The FAD-dependent monooxygenase phqK is likely responsible for generation of the spiro-oxindole, and the N-methylation is likely mediated by the phqN methyltransferase leading to the isolable natural product paraherquamide F. However, the order of these biosynthetic steps has still to be determined. In late-stage paraherquamide biosynthesis, the third P450 monooxygenase, phqO, is probably responsible for the C-14 hydroxylation, transforming paraherquamide F to paraherquamide G, and paraherquamide E to the final product paraherquamide A. The expansion from the 6-membered ring pyran (in paraherquamides F and G) to the 7-membered dioxepin ring (in paraherquamides A and E) represents a poorly understood but intriguing process that probably involves the 2-oxoglutarate-dependent dioxygenase phqC. Finally, the remaining members of the paraherquamide cluster, including phqI as well as phqM (or phqH), do not have a clearly prescribed role and appear to be redundant. The sequence is that of Cytochrome P450 monooxygenase phqL from Penicillium fellutanum.